The chain runs to 652 residues: DNA mismatch repair protein MutL (652 aa).

The protein belongs to the DNA mismatch repair MutL/HexB family.

Functionally, this protein is involved in the repair of mismatches in DNA. It is required for dam-dependent methyl-directed DNA mismatch repair. May act as a 'molecular matchmaker', a protein that promotes the formation of a stable complex between two or more DNA-binding proteins in an ATP-dependent manner without itself being part of a final effector complex. This is DNA mismatch repair protein MutL from Neorickettsia sennetsu (strain ATCC VR-367 / Miyayama) (Ehrlichia sennetsu).